A 203-amino-acid polypeptide reads, in one-letter code: MAFSPLVDQLLETLRVLPGVGPKTAQRMALHLLERDRDGGRRLVAALGEALEHVGYCQRCRTLAETPLCSICEDARRDEGLLCVVESPADMLAIEQAGGFRGLYFVLHGHLSPLDGIGPEDIGLDQLDERLAGGSVEEVILATNPTVEGEATAHYIAEQLRGTGVRLSRLAYGVPMGGELEYVDGGTLSRAFNGRLPFAQESS.

The C4-type zinc finger occupies 57–72 (CQRCRTLAETPLCSIC). The region spanning 80 to 175 (GLLCVVESPA…RLSRLAYGVP (96 aa)) is the Toprim domain.

This sequence belongs to the RecR family.

Its function is as follows. May play a role in DNA repair. It seems to be involved in an RecBC-independent recombinational process of DNA repair. It may act with RecF and RecO. The chain is Recombination protein RecR from Chromohalobacter salexigens (strain ATCC BAA-138 / DSM 3043 / CIP 106854 / NCIMB 13768 / 1H11).